A 230-amino-acid polypeptide reads, in one-letter code: ATP-dependent dethiobiotin synthetase BioD (230 aa).

12–17 (DIGKTH) serves as a coordination point for ATP. Threonine 16 provides a ligand contact to Mg(2+). Lysine 37 is a catalytic residue. Substrate is bound at residue serine 41. ATP is bound by residues aspartate 52, 115–118 (EGAG), and 175–176 (SE). Residues aspartate 52 and glutamate 115 each coordinate Mg(2+).

Belongs to the dethiobiotin synthetase family. In terms of assembly, homodimer. It depends on Mg(2+) as a cofactor.

Its subcellular location is the cytoplasm. The catalysed reaction is (7R,8S)-7,8-diammoniononanoate + CO2 + ATP = (4R,5S)-dethiobiotin + ADP + phosphate + 3 H(+). It participates in cofactor biosynthesis; biotin biosynthesis; biotin from 7,8-diaminononanoate: step 1/2. Functionally, catalyzes a mechanistically unusual reaction, the ATP-dependent insertion of CO2 between the N7 and N8 nitrogen atoms of 7,8-diaminopelargonic acid (DAPA, also called 7,8-diammoniononanoate) to form a ureido ring. This chain is ATP-dependent dethiobiotin synthetase BioD, found in Caulobacter sp. (strain K31).